Here is a 227-residue protein sequence, read N- to C-terminus: Cytochrome c oxidase subunit 2 (227 aa).

Topologically, residues 1–14 (MAYPFQLGLQDATS) are mitochondrial intermembrane. A helical membrane pass occupies residues 15 to 45 (PIMEELLHFHDHTLMIVFLISSLVLYIISLM). Residues 46 to 59 (LTTKLTHTSTMDAQ) are Mitochondrial matrix-facing. A helical transmembrane segment spans residues 60-87 (EVETVWTILPAIILVLIALPSLRILYMM). At 88–227 (DEINNPSLTV…YFETWSALMV (140 aa)) the chain is on the mitochondrial intermembrane side. The Cu cation site is built by His161, Cys196, Glu198, Cys200, His204, and Met207. Position 198 (Glu198) interacts with Mg(2+). The residue at position 218 (Tyr218) is a Phosphotyrosine.

Belongs to the cytochrome c oxidase subunit 2 family. In terms of assembly, component of the cytochrome c oxidase (complex IV, CIV), a multisubunit enzyme composed of 14 subunits. The complex is composed of a catalytic core of 3 subunits MT-CO1, MT-CO2 and MT-CO3, encoded in the mitochondrial DNA, and 11 supernumerary subunits COX4I, COX5A, COX5B, COX6A, COX6B, COX6C, COX7A, COX7B, COX7C, COX8 and NDUFA4, which are encoded in the nuclear genome. The complex exists as a monomer or a dimer and forms supercomplexes (SCs) in the inner mitochondrial membrane with NADH-ubiquinone oxidoreductase (complex I, CI) and ubiquinol-cytochrome c oxidoreductase (cytochrome b-c1 complex, complex III, CIII), resulting in different assemblies (supercomplex SCI(1)III(2)IV(1) and megacomplex MCI(2)III(2)IV(2)). Found in a complex with TMEM177, COA6, COX18, COX20, SCO1 and SCO2. Interacts with TMEM177 in a COX20-dependent manner. Interacts with COX20. Interacts with COX16. Cu cation serves as cofactor.

It is found in the mitochondrion inner membrane. The catalysed reaction is 4 Fe(II)-[cytochrome c] + O2 + 8 H(+)(in) = 4 Fe(III)-[cytochrome c] + 2 H2O + 4 H(+)(out). Component of the cytochrome c oxidase, the last enzyme in the mitochondrial electron transport chain which drives oxidative phosphorylation. The respiratory chain contains 3 multisubunit complexes succinate dehydrogenase (complex II, CII), ubiquinol-cytochrome c oxidoreductase (cytochrome b-c1 complex, complex III, CIII) and cytochrome c oxidase (complex IV, CIV), that cooperate to transfer electrons derived from NADH and succinate to molecular oxygen, creating an electrochemical gradient over the inner membrane that drives transmembrane transport and the ATP synthase. Cytochrome c oxidase is the component of the respiratory chain that catalyzes the reduction of oxygen to water. Electrons originating from reduced cytochrome c in the intermembrane space (IMS) are transferred via the dinuclear copper A center (CU(A)) of subunit 2 and heme A of subunit 1 to the active site in subunit 1, a binuclear center (BNC) formed by heme A3 and copper B (CU(B)). The BNC reduces molecular oxygen to 2 water molecules using 4 electrons from cytochrome c in the IMS and 4 protons from the mitochondrial matrix. The protein is Cytochrome c oxidase subunit 2 (MT-CO2) of Cerdocyon thous (Crab-eating fox).